Reading from the N-terminus, the 174-residue chain is N5-carboxyaminoimidazole ribonucleotide mutase (174 aa).

3 residues coordinate substrate: Ser15, Asp18, and Arg45.

The protein belongs to the AIR carboxylase family. Class I subfamily.

It carries out the reaction 5-carboxyamino-1-(5-phospho-D-ribosyl)imidazole + H(+) = 5-amino-1-(5-phospho-D-ribosyl)imidazole-4-carboxylate. The protein operates within purine metabolism; IMP biosynthesis via de novo pathway; 5-amino-1-(5-phospho-D-ribosyl)imidazole-4-carboxylate from 5-amino-1-(5-phospho-D-ribosyl)imidazole (N5-CAIR route): step 2/2. In terms of biological role, catalyzes the conversion of N5-carboxyaminoimidazole ribonucleotide (N5-CAIR) to 4-carboxy-5-aminoimidazole ribonucleotide (CAIR). This chain is N5-carboxyaminoimidazole ribonucleotide mutase, found in Pyrococcus abyssi (strain GE5 / Orsay).